Consider the following 507-residue polypeptide: MYRLRRKRAAPKDIYPSCKISNTCPPDIQNKIEHTTIADKILQYGSLGVFLGGLGIGTARGSGGRIGYTPLGEGGGVRVATRPTPVRPTIPVETVGPSEIFPIDVVDPTGPAVIPLQDLGRDFPIPTVQVIAEIHPISDIPNIVASSTNEGESAILDVLRGNATIRTVSRTQYNNPSFTVASTSNISAGEASTSDIVFVSNGSGDRVVGEDIPLVELNLGLETDTSSVVQETAFSSSTPIAERPSFRPSRFYNRRLYEQVQVQDPRFVEQPQSMVTFDNPAFEPELDEVSIIFQRDLDALAQTPVPEFRDVVYLSKPTFSREPGGRLRVSRLGKSSTIRTRLGTAIGARTHFFYDLSSIAPEDSIELLPLGEHSQTTVISSNLGDTAFIQGETAEDDLEVISLETPQLYSEEELLDTNESVGENLQLTITNSEGEVSILDLTQSRVRPPFGTEDTSLHVYYPNSSKGTPIINPEESFTPLVIIALNNSTGDFELHPSLRKRRKRAYV.

Residues 1–9 (MYRLRRKRA) carry the Nuclear localization signal motif. Cys-18 and Cys-24 are joined by a disulfide. Positions 500-506 (KRRKRAY) match the Nuclear localization signal motif.

It belongs to the papillomaviridae L2 protein family. As to quaternary structure, interacts with major capsid protein L1. Interacts with E2; this interaction inhibits E2 transcriptional activity but not the DNA replication function E2. Interacts with host GADD45GIP1. Interacts with host HSPA8; this interaction is required for L2 nuclear translocation. Interacts with host importins KPNB2 and KPNB3. Forms a complex with importin alpha2-beta1 heterodimers via interaction with the importin alpha2 adapter. Interacts with host DYNLT1; this interaction is essential for virus intracellular transport during entry. Interacts (via C-terminus) with host retromer subunits VPS35 and VPS29. Post-translationally, highly phosphorylated.

The protein resides in the virion. It is found in the host nucleus. The protein localises to the host early endosome. It localises to the host Golgi apparatus. Its function is as follows. Minor protein of the capsid that localizes along the inner surface of the virion, within the central cavities beneath the L1 pentamers. Plays a role in capsid stabilization through interaction with the major capsid protein L1. Once the virion enters the host cell, L2 escorts the genomic DNA into the nucleus by promoting escape from the endosomal compartments and traffic through the host Golgi network. Mechanistically, the C-terminus of L2 possesses a cell-penetrating peptide that protudes from the host endosome, interacts with host cytoplasmic retromer cargo and thereby mediates the capsid delivery to the host trans-Golgi network. Plays a role through its interaction with host dynein in the intracellular microtubule-dependent transport of viral capsid toward the nucleus. Mediates the viral genome import into the nucleus through binding to host importins. Once within the nucleus, L2 localizes viral genomes to host PML bodies in order to activate early gene expression for establishment of infection. Later on, promotes late gene expression by interacting with the viral E2 protein and by inhibiting its transcriptional activation functions. During virion assembly, encapsidates the genome by direct interaction with the viral DNA. The sequence is that of Minor capsid protein L2 from Human papillomavirus type 1 (Human papillomavirus type 1a).